A 219-amino-acid polypeptide reads, in one-letter code: 2-C-methyl-D-erythritol 4-phosphate cytidylyltransferase (219 aa).

This sequence belongs to the IspD/TarI cytidylyltransferase family. IspD subfamily.

It catalyses the reaction 2-C-methyl-D-erythritol 4-phosphate + CTP + H(+) = 4-CDP-2-C-methyl-D-erythritol + diphosphate. Its pathway is isoprenoid biosynthesis; isopentenyl diphosphate biosynthesis via DXP pathway; isopentenyl diphosphate from 1-deoxy-D-xylulose 5-phosphate: step 2/6. Catalyzes the formation of 4-diphosphocytidyl-2-C-methyl-D-erythritol from CTP and 2-C-methyl-D-erythritol 4-phosphate (MEP). The protein is 2-C-methyl-D-erythritol 4-phosphate cytidylyltransferase of Phocaeicola vulgatus (strain ATCC 8482 / DSM 1447 / JCM 5826 / CCUG 4940 / NBRC 14291 / NCTC 11154) (Bacteroides vulgatus).